The sequence spans 342 residues: Holliday junction branch migration complex subunit RuvB (342 aa).

The tract at residues 1–185 is large ATPase domain (RuvB-L); sequence MTVKPLRDVT…FPIQERLEYY (185 aa). Residues leucine 24, arginine 25, glycine 66, lysine 69, threonine 70, serine 71, 132 to 134, arginine 175, tyrosine 185, and arginine 222 each bind ATP; that span reads EDY. Residue threonine 70 coordinates Mg(2+). Positions 186–256 are small ATPAse domain (RuvB-S); that stretch reads GPAELKEIAV…VVDRTLRRLE (71 aa). A head domain (RuvB-H) region spans residues 259–342; that stretch reads ARGLDAMDRR…RSGGKQGSLV (84 aa). DNA contacts are provided by arginine 314 and arginine 319.

It belongs to the RuvB family. Homohexamer. Forms an RuvA(8)-RuvB(12)-Holliday junction (HJ) complex. HJ DNA is sandwiched between 2 RuvA tetramers; dsDNA enters through RuvA and exits via RuvB. An RuvB hexamer assembles on each DNA strand where it exits the tetramer. Each RuvB hexamer is contacted by two RuvA subunits (via domain III) on 2 adjacent RuvB subunits; this complex drives branch migration. In the full resolvosome a probable DNA-RuvA(4)-RuvB(12)-RuvC(2) complex forms which resolves the HJ.

The protein localises to the cytoplasm. It carries out the reaction ATP + H2O = ADP + phosphate + H(+). Its function is as follows. The RuvA-RuvB-RuvC complex processes Holliday junction (HJ) DNA during genetic recombination and DNA repair, while the RuvA-RuvB complex plays an important role in the rescue of blocked DNA replication forks via replication fork reversal (RFR). RuvA specifically binds to HJ cruciform DNA, conferring on it an open structure. The RuvB hexamer acts as an ATP-dependent pump, pulling dsDNA into and through the RuvAB complex. RuvB forms 2 homohexamers on either side of HJ DNA bound by 1 or 2 RuvA tetramers; 4 subunits per hexamer contact DNA at a time. Coordinated motions by a converter formed by DNA-disengaged RuvB subunits stimulates ATP hydrolysis and nucleotide exchange. Immobilization of the converter enables RuvB to convert the ATP-contained energy into a lever motion, pulling 2 nucleotides of DNA out of the RuvA tetramer per ATP hydrolyzed, thus driving DNA branch migration. The RuvB motors rotate together with the DNA substrate, which together with the progressing nucleotide cycle form the mechanistic basis for DNA recombination by continuous HJ branch migration. Branch migration allows RuvC to scan DNA until it finds its consensus sequence, where it cleaves and resolves cruciform DNA. This is Holliday junction branch migration complex subunit RuvB from Anaeromyxobacter dehalogenans (strain 2CP-C).